The primary structure comprises 310 residues: p-hydroxybenzoic acid efflux pump subunit AaeA (310 aa).

Residues alanine 12–tyrosine 32 traverse the membrane as a helical segment.

This sequence belongs to the membrane fusion protein (MFP) (TC 8.A.1) family.

It localises to the cell inner membrane. Forms an efflux pump with AaeB. In Escherichia fergusonii (strain ATCC 35469 / DSM 13698 / CCUG 18766 / IAM 14443 / JCM 21226 / LMG 7866 / NBRC 102419 / NCTC 12128 / CDC 0568-73), this protein is p-hydroxybenzoic acid efflux pump subunit AaeA.